A 705-amino-acid polypeptide reads, in one-letter code: MAQRSPQELFHEAAQQGILAQPQPWWKIQLFMWEPVLFGTWDGVFTSCMINIFGVVLFLRTGWLVGNTGVLLGLLLVSFVVLVALITVLSGIGVAEHGGISSGGVYSMISSVLGGQMGGTVGLLYVFGQCVAGAMYITGFAESISDLLGLGDIWAVRGISVAVLLALLGINLAGVKWIIRLQLLLLLLLAVSTLDFVVGSFTHLDPEHGFIGYSPELLQSNILPEYSPGESFFTVFGVFFPAATGVMAGFNMGGDLRDPADSVPLGSLAAVGVSWFLYIIFAFLLGAVCTREALRSDFLIAEKVSLVGFLFLLGLYISSLASCMGGLYGAPRILQCIAQDKVIPALAFLANGKGPNKTPVAAICLTSLVTMAFVLVGQVNVLAPVVTINFMLTYIMVDYSYFALSMAHCGLAPSPEPVPRQGPDTLHCSEHLLQDRAPSYGSDVPARSLSEGTLLEFTKDMDQFLQPIEELESRQLGSREGNNPKNQKRKGKKGAKQTLQDSFLLDPGSPLSFPTRTSERLSVAFCGEQESYQKQQTSRSESHDHLVPDLRNQPRVNREDFFLKCRLQEQEIQRRPSVFYACMCNPWVSLLGALASLLIMFVIQWLYTLASMGVAALVYFYIGQASPGLYLGSASNFSFFQWMKSFLVPSCRSLRSAQEQIILAPSPAKVDMAMTQLTQDNADFATRDRYHHSSFLSREQLMPPY.

Helical transmembrane passes span 38-58 (FGTWDGVFTSCMINIFGVVLF), 69-89 (GVLLGLLLVSFVVLVALITVL), 92-112 (IGVAEHGGISSGGVYSMISSV), 121-141 (VGLLYVFGQCVAGAMYITGFA), 159-179 (ISVAVLLALLGINLAGVKWII), 181-201 (LQLLLLLLLAVSTLDFVVGSF), 232-252 (FFTVFGVFFPAATGVMAGFNM), 268-288 (LAAVGVSWFLYIIFAFLLGAV), 306-326 (LVGFLFLLGLYISSLASCMGG), 368-388 (LVTMAFVLVGQVNVLAPVVTI), and 390-410 (FMLTYIMVDYSYFALSMAHCG). Residues 472–512 (ESRQLGSREGNNPKNQKRKGKKGAKQTLQDSFLLDPGSPLS) form a disordered region. Residues 486–495 (NQKRKGKKGA) show a composition bias toward basic residues. Helical transmembrane passes span 587-607 (WVSLLGALASLLIMFVIQWLY) and 612-632 (MGVAALVYFYIGQASPGLYLG).

Belongs to the SLC12A transporter family.

It is found in the membrane. Functionally, cation/chloride cotransporter that may play a role in the control of keratinocyte proliferation. This is Solute carrier family 12 member 8 (Slc12a8) from Mus musculus (Mouse).